The following is a 328-amino-acid chain: D-cysteine desulfhydrase (328 aa).

Lys-51 is modified (N6-(pyridoxal phosphate)lysine).

Belongs to the ACC deaminase/D-cysteine desulfhydrase family. Homodimer. Requires pyridoxal 5'-phosphate as cofactor.

The enzyme catalyses D-cysteine + H2O = hydrogen sulfide + pyruvate + NH4(+) + H(+). Functionally, catalyzes the alpha,beta-elimination reaction of D-cysteine and of several D-cysteine derivatives. It could be a defense mechanism against D-cysteine. This is D-cysteine desulfhydrase from Escherichia coli O9:H4 (strain HS).